The sequence spans 538 residues: Phosphoenolpyruvate carboxykinase (ATP) (538 aa).

The substrate site is built by arginine 62, tyrosine 203, and lysine 209. ATP contacts are provided by residues lysine 209, histidine 228, and 244–252; that span reads GLSGTGKTT. 2 residues coordinate Mn(2+): lysine 209 and histidine 228. Residue aspartate 265 participates in Mn(2+) binding. Residues glutamate 293, arginine 329, 445-446, and threonine 451 contribute to the ATP site; that span reads RI. Residue arginine 329 coordinates substrate.

Belongs to the phosphoenolpyruvate carboxykinase (ATP) family. In terms of assembly, monomer. Mn(2+) serves as cofactor.

The protein resides in the cytoplasm. The enzyme catalyses oxaloacetate + ATP = phosphoenolpyruvate + ADP + CO2. It participates in carbohydrate biosynthesis; gluconeogenesis. Functionally, involved in the gluconeogenesis. Catalyzes the conversion of oxaloacetate (OAA) to phosphoenolpyruvate (PEP) through direct phosphoryl transfer between the nucleoside triphosphate and OAA. This is Phosphoenolpyruvate carboxykinase (ATP) from Haemophilus ducreyi (strain 35000HP / ATCC 700724).